A 282-amino-acid chain; its full sequence is DegV domain-containing protein spr1415 (282 aa).

The 278-residue stretch at 3–280 folds into the DegV domain; it reads LAVFTDSSAY…AGSIALGYIP (278 aa). Hexadecanoate is bound by residues Thr61 and Ser94.

In terms of biological role, may bind long-chain fatty acids, such as palmitate, and may play a role in lipid transport or fatty acid metabolism. The chain is DegV domain-containing protein spr1415 from Streptococcus pneumoniae (strain ATCC BAA-255 / R6).